The primary structure comprises 231 residues: Lipoprotein-releasing system ATP-binding protein LolD (231 aa).

One can recognise an ABC transporter domain in the interval 6–230 (LSCKNVSKKY…DGELELVINS (225 aa)). An ATP-binding site is contributed by 42-49 (GLSGSGKT).

The protein belongs to the ABC transporter superfamily. Lipoprotein translocase (TC 3.A.1.125) family. In terms of assembly, the complex is composed of two ATP-binding proteins (LolD) and two transmembrane proteins (LolC and LolE).

The protein localises to the cell inner membrane. Functionally, part of the ABC transporter complex LolCDE involved in the translocation of mature outer membrane-directed lipoproteins, from the inner membrane to the periplasmic chaperone, LolA. Responsible for the formation of the LolA-lipoprotein complex in an ATP-dependent manner. The chain is Lipoprotein-releasing system ATP-binding protein LolD from Francisella tularensis subsp. tularensis (strain FSC 198).